Here is a 264-residue protein sequence, read N- to C-terminus: Hemin import ATP-binding protein HmuV (264 aa).

Residues 2–242 enclose the ABC transporter domain; it reads IEAVNICVQR…QNLSDAYHCS (241 aa). ATP is bound at residue 34 to 41; the sequence is GPNGSGKS.

Belongs to the ABC transporter superfamily. Heme (hemin) importer (TC 3.A.1.14.5) family. In terms of assembly, the complex is composed of two ATP-binding proteins (HmuV), two transmembrane proteins (HmuU) and a solute-binding protein (HmuT).

The protein resides in the cell inner membrane. Functionally, part of the ABC transporter complex HmuTUV involved in hemin import. Responsible for energy coupling to the transport system. The protein is Hemin import ATP-binding protein HmuV of Bartonella quintana (strain Toulouse) (Rochalimaea quintana).